The sequence spans 107 residues: Large ribosomal subunit protein uL18c (107 aa).

The protein belongs to the universal ribosomal protein uL18 family. In terms of assembly, part of the 50S ribosomal subunit; contacts the 5S rRNA.

The protein resides in the plastid. It localises to the chloroplast. Binds 5S rRNA, forms part of the central protuberance of the 50S subunit. The sequence is that of Large ribosomal subunit protein uL18c (rpl18) from Guillardia theta (Cryptophyte).